Consider the following 718-residue polypeptide: MSNESKCPFSGHNSKPQVTVGGGTANLHWWPNQLRVDLLNQHSERSNPLGKDFNYRQEFKKLDYYALKADIKNVLTDSQDWWPADWGNYTGLFIRLAWHAAGTYRMGDGRGGAGRGQQRFAPLNSWPDNASLDKARRLLWPVKQKYGQKISWADLFILAGNIALESSGFRTFGFGAGREDVWEPDNDVNWGDEKEWLAHRNSEALAGSNLAATEMGLIYVNPEGPQASGDPRSAAPFIRATFGNMAMDDEEIVALIAGGHTLGKTHGAAPADHVQADPEGAPIEQMGFGWANSYGTGVGKDAITSGLEVIWSQTPTQWSNYFFENLFKYEWVQERSPAGAIQWVAADAEAIIPDPFDPSIKRKPTMLTTDLTLRFDPEFEKISRRFLNDPQAFANAFARAWFKLTHRDMGPKARYLGPEVPTEDLIWQDPLPAASATPSSASIADAKAKIVALGLPAGELVSLAWASASTFRGGDKRGGANGARIALSPQREWEVNKKAVETLTKIEELKASTQLSLADLIVLAGNVGVEQAAQAAGFNITVPFAPGRVDALQSQTDVESFQLLLGLADGFRNWKKQGVNTPAEVLLIDKAQQLTLTAPELTALIGGLRVLGTNWDGSQHGVFTQQVGVLSTDFFTNLLDMSNVWAPVDSTSEVFEGKDRKSGTVKFTATRNDLVFGSNSILRALAEVYAQADGKEKFVQDFVAAWTKVMNLDRFDLA.

A cross-link (tryptophyl-tyrosyl-methioninium (Trp-Tyr) (with M-245)) is located at residues 98–219; it reads WHAAGTYRMG…LAATEMGLIY (122 aa). The Proton acceptor role is filled by His99. The segment at residues 219–245 is a cross-link (tryptophyl-tyrosyl-methioninium (Tyr-Met) (with W-98)); that stretch reads YVNPEGPQASGDPRSAAPFIRATFGNM. His260 is a binding site for heme b.

Belongs to the peroxidase family. Peroxidase/catalase subfamily. As to quaternary structure, homodimer or homotetramer. The cofactor is heme b. In terms of processing, formation of the three residue Trp-Tyr-Met cross-link is important for the catalase, but not the peroxidase activity of the enzyme.

It carries out the reaction H2O2 + AH2 = A + 2 H2O. The enzyme catalyses 2 H2O2 = O2 + 2 H2O. Bifunctional enzyme with both catalase and broad-spectrum peroxidase activity. The protein is Catalase-peroxidase of Acinetobacter baumannii (strain AB307-0294).